The primary structure comprises 317 residues: Melanocyte-stimulating hormone receptor (317 aa).

At 1-37 (MRVQGSQRRLLGSLNSTPTATPHLGLAANQTGARCLE) the chain is on the extracellular side. Asparagine 29 carries N-linked (GlcNAc...) asparagine glycosylation. Residues 38–63 (VSIPDGLFLSLGLVSLVENVLVVTAI) form a helical membrane-spanning segment. Residues 64–72 (AKNRNLHSP) are Cytoplasmic-facing. A helical transmembrane segment spans residues 73 to 93 (MYCFICCLALSDLLVSGSNML). Over 94–118 (ETAVTLLLEAGALAARAAVVQQLDN) the chain is Extracellular. The chain crosses the membrane as a helical span at residues 119–140 (VIDVITCSSMLSSLCFLGAIAV). Topologically, residues 141 to 163 (DRYISIFYALRYHSIVTLPRARR) are cytoplasmic. A helical transmembrane segment spans residues 164 to 183 (AIAAIWVASVLCSTLFIAYY). At 184 to 191 (DHAAVLLC) the chain is on the extracellular side. Residues 192 to 211 (LVVFFLAMLVLMAVLYVHML) form a helical membrane-spanning segment. Residues 212–240 (ARACQHAQGIARLHKRQRLAHQGFGLKGA) are Cytoplasmic-facing. A helical membrane pass occupies residues 241 to 266 (ATLTILLGIFFLCWGPFFLHLTLIVL). Topologically, residues 267–279 (CPQHPTCSCIFKN) are extracellular. The chain crosses the membrane as a helical span at residues 280 to 300 (FNLFLALIICNAIIDPLIYAF). Residues 301–317 (RSQELRRTLKEVLLCSW) lie on the Cytoplasmic side of the membrane. The S-palmitoyl cysteine moiety is linked to residue cysteine 315.

The protein belongs to the G-protein coupled receptor 1 family. In terms of assembly, interacts with MGRN1, but does not undergo MGRN1-mediated ubiquitination; this interaction competes with GNAS-binding and thus inhibits agonist-induced cAMP production. Interacts with OPN3; the interaction results in a decrease in MC1R-mediated cAMP signaling and ultimately a decrease in melanin production in melanocytes.

The protein resides in the cell membrane. Receptor for MSH (alpha, beta and gamma) and ACTH. The activity of this receptor is mediated by G proteins which activate adenylate cyclase. Mediates melanogenesis, the production of eumelanin (black/brown) and phaeomelanin (red/yellow), via regulation of cAMP signaling in melanocytes. This is Melanocyte-stimulating hormone receptor (MC1R) from Macaca nigra (Celebes black macaque).